The primary structure comprises 458 residues: Ribosomal protein uS12 methylthiotransferase RimO (458 aa).

One can recognise an MTTase N-terminal domain in the interval 26 to 136 (PRIGMVSLGC…VLDAVHGAVP (111 aa)). [4Fe-4S] cluster-binding residues include cysteine 35, cysteine 71, cysteine 100, cysteine 167, cysteine 171, and cysteine 174. A Radical SAM core domain is found at 153–389 (LTPRHYAYLK…MEKAQAISEA (237 aa)). The 67-residue stretch at 392–458 (QAKVGRTMQV…SEYDLWGKLT (67 aa)) folds into the TRAM domain.

Belongs to the methylthiotransferase family. RimO subfamily. [4Fe-4S] cluster is required as a cofactor.

The protein localises to the cytoplasm. It catalyses the reaction L-aspartate(89)-[ribosomal protein uS12]-hydrogen + (sulfur carrier)-SH + AH2 + 2 S-adenosyl-L-methionine = 3-methylsulfanyl-L-aspartate(89)-[ribosomal protein uS12]-hydrogen + (sulfur carrier)-H + 5'-deoxyadenosine + L-methionine + A + S-adenosyl-L-homocysteine + 2 H(+). Catalyzes the methylthiolation of an aspartic acid residue of ribosomal protein uS12. In Jannaschia sp. (strain CCS1), this protein is Ribosomal protein uS12 methylthiotransferase RimO.